Reading from the N-terminus, the 792-residue chain is Protein SEY1 homolog 2 (792 aa).

At 1 to 638 (MEQIITGDGA…NIKAQANREQ (638 aa)) the chain is on the cytoplasmic side. A GB1/RHD3-type G domain is found at 28–245 (GVDYHTVAII…LKDYLFAEKS (218 aa)). Residue 38-45 (GPQSSGKS) coordinates GTP. A helical membrane pass occupies residues 639–659 (IPGWAWLATFLCSSNYIMKLL). The Lumenal segment spans residues 660–662 (ANP). Residues 663–683 (IFFALAVIIGGIYSILRMLGL) traverse the membrane as a helical segment. At 684 to 792 (QDVAKKTLLD…LTRTQSLEFM (109 aa)) the chain is on the cytoplasmic side. Residues 691 to 718 (LLDKFNSLLKNLTKDENEQEKEGEENEE) are a coiled coil. Residues 703–792 (TKDENEQEKE…LTRTQSLEFM (90 aa)) form a disordered region. Positions 707–723 (NEQEKEGEENEEPEEDQ) are enriched in acidic residues. 2 stretches are compositionally biased toward polar residues: residues 739 to 751 (SVSQ…SIYK) and 764 to 774 (IPQTSPLGNND).

Belongs to the TRAFAC class dynamin-like GTPase superfamily. GB1/RHD3 GTPase family. RHD3 subfamily.

It localises to the endoplasmic reticulum membrane. In terms of biological role, probable GTP-binding protein that may be involved in cell development. The sequence is that of Protein SEY1 homolog 2 from Trichomonas vaginalis (strain ATCC PRA-98 / G3).